The sequence spans 185 residues: Peptidyl-tRNA hydrolase (185 aa).

Tyr14 provides a ligand contact to tRNA. The active-site Proton acceptor is His19. 3 residues coordinate tRNA: Phe64, Asn66, and Asn112.

This sequence belongs to the PTH family. Monomer.

The protein resides in the cytoplasm. It carries out the reaction an N-acyl-L-alpha-aminoacyl-tRNA + H2O = an N-acyl-L-amino acid + a tRNA + H(+). Its function is as follows. Hydrolyzes ribosome-free peptidyl-tRNAs (with 1 or more amino acids incorporated), which drop off the ribosome during protein synthesis, or as a result of ribosome stalling. Catalyzes the release of premature peptidyl moieties from peptidyl-tRNA molecules trapped in stalled 50S ribosomal subunits, and thus maintains levels of free tRNAs and 50S ribosomes. This chain is Peptidyl-tRNA hydrolase, found in Lactobacillus gasseri (strain ATCC 33323 / DSM 20243 / BCRC 14619 / CIP 102991 / JCM 1131 / KCTC 3163 / NCIMB 11718 / NCTC 13722 / AM63).